Reading from the N-terminus, the 327-residue chain is Acetaldehyde dehydrogenase 6 (327 aa).

Position 15-18 (15-18) interacts with NAD(+); it reads SGNI. The Acyl-thioester intermediate role is filled by Cys-133. NAD(+) contacts are provided by residues 164–172 and Asn-297; that span reads SAGPGTRAN.

This sequence belongs to the acetaldehyde dehydrogenase family.

It catalyses the reaction acetaldehyde + NAD(+) + CoA = acetyl-CoA + NADH + H(+). In Rhodococcus opacus (strain B4), this protein is Acetaldehyde dehydrogenase 6.